We begin with the raw amino-acid sequence, 334 residues long: Sterol 4-C-methyltransferase strm-1 (334 aa).

It belongs to the class I-like SAM-binding methyltransferase superfamily. Erg6/SMT family. As to expression, expressed in the pharynx and hypodermal syncytium.

The catalysed reaction is 5alpha-cholest-7-en-3-one + S-adenosyl-L-methionine = 4alpha-methyl-5alpha-cholest-7-en-3-one + S-adenosyl-L-homocysteine + H(+). The protein operates within steroid hormone biosynthesis; dafachronic acid biosynthesis. Functionally, catalyzes the methyl transfer from S-adenosyl-methionine to the C-4 of the A-ring sterols such as lathosterone (5alpha-cholest-7-en-3-one) thereby rendering them unsuitable as ligand precursors. May irreversibly shunt sterols away from hormone dafachronic acid production. Dafachronic acids act as ligands and bind directly to the nuclear hormone receptor (NHR) daf-12 suppressing dauer formation and inducing reproductive growth. By reducing the biosynthesis of dafachronic acids, this methyltransferase can regulate dauer larva formation. This chain is Sterol 4-C-methyltransferase strm-1 (strm-1), found in Caenorhabditis elegans.